A 103-amino-acid chain; its full sequence is Large ribosomal subunit protein bL21 (103 aa).

This sequence belongs to the bacterial ribosomal protein bL21 family. As to quaternary structure, part of the 50S ribosomal subunit. Contacts protein L20.

In terms of biological role, this protein binds to 23S rRNA in the presence of protein L20. The sequence is that of Large ribosomal subunit protein bL21 from Clostridium beijerinckii (strain ATCC 51743 / NCIMB 8052) (Clostridium acetobutylicum).